Consider the following 473-residue polypeptide: Sensor histidine kinase YclK (473 aa).

Over 1–9 the chain is Cytoplasmic; it reads MMKIKYLYQ. Residues 10-30 traverse the membrane as a helical segment; that stretch reads LLLSHISILILAFVIIISLFS. The Extracellular segment spans residues 31-164; it reads HFVKEFAYQN…GVEQMVNQVN (134 aa). Residues 165-185 form a helical membrane-spanning segment; that stretch reads LYMFYAVISTLVITILVSWLL. The Cytoplasmic portion of the chain corresponds to 186 to 473; the sequence is SKFHVKRIQK…IRLPLTAKQQ (288 aa). The region spanning 187 to 239 is the HAMP domain; sequence KFHVKRIQKLREATDKVASGDYDIHLENSYGDEIGVLASDFNIMAKKLKQSRD. Residues 254–470 form the Histidine kinase domain; that stretch reads DVSHELKTPL…KFIIRLPLTA (217 aa). His-257 carries the phosphohistidine; by autocatalysis modification.

The protein localises to the cell membrane. It catalyses the reaction ATP + protein L-histidine = ADP + protein N-phospho-L-histidine.. Its function is as follows. Could be member of the two-component regulatory system YclK/YclJ. Potentially phosphorylates YclJ. The protein is Sensor histidine kinase YclK (yclK) of Bacillus subtilis (strain 168).